Consider the following 387-residue polypeptide: Sulfate adenylyltransferase (387 aa).

This sequence belongs to the sulfate adenylyltransferase family.

It carries out the reaction sulfate + ATP + H(+) = adenosine 5'-phosphosulfate + diphosphate. It functions in the pathway sulfur metabolism; hydrogen sulfide biosynthesis; sulfite from sulfate: step 1/3. The chain is Sulfate adenylyltransferase (sat) from Deinococcus radiodurans (strain ATCC 13939 / DSM 20539 / JCM 16871 / CCUG 27074 / LMG 4051 / NBRC 15346 / NCIMB 9279 / VKM B-1422 / R1).